The sequence spans 233 residues: Phosphoribosylformylglycinamidine synthase subunit PurQ (233 aa).

Positions 3–233 constitute a Glutamine amidotransferase type-1 domain; that stretch reads SAILVFPGIN…GLVAHLERAA (231 aa). The active-site Nucleophile is the cysteine 87. Residues histidine 204 and glutamate 206 contribute to the active site.

Part of the FGAM synthase complex composed of 1 PurL, 1 PurQ and 2 PurS subunits.

The protein localises to the cytoplasm. It catalyses the reaction N(2)-formyl-N(1)-(5-phospho-beta-D-ribosyl)glycinamide + L-glutamine + ATP + H2O = 2-formamido-N(1)-(5-O-phospho-beta-D-ribosyl)acetamidine + L-glutamate + ADP + phosphate + H(+). The catalysed reaction is L-glutamine + H2O = L-glutamate + NH4(+). The protein operates within purine metabolism; IMP biosynthesis via de novo pathway; 5-amino-1-(5-phospho-D-ribosyl)imidazole from N(2)-formyl-N(1)-(5-phospho-D-ribosyl)glycinamide: step 1/2. Part of the phosphoribosylformylglycinamidine synthase complex involved in the purines biosynthetic pathway. Catalyzes the ATP-dependent conversion of formylglycinamide ribonucleotide (FGAR) and glutamine to yield formylglycinamidine ribonucleotide (FGAM) and glutamate. The FGAM synthase complex is composed of three subunits. PurQ produces an ammonia molecule by converting glutamine to glutamate. PurL transfers the ammonia molecule to FGAR to form FGAM in an ATP-dependent manner. PurS interacts with PurQ and PurL and is thought to assist in the transfer of the ammonia molecule from PurQ to PurL. The polypeptide is Phosphoribosylformylglycinamidine synthase subunit PurQ (Nitrobacter hamburgensis (strain DSM 10229 / NCIMB 13809 / X14)).